The following is a 159-amino-acid chain: Phosphopantetheine adenylyltransferase (159 aa).

Threonine 10 lines the substrate pocket. Residues 10–11 (TF) and histidine 18 contribute to the ATP site. Lysine 42, methionine 74, and arginine 88 together coordinate substrate. ATP is bound by residues 89 to 91 (GLR), glutamate 99, and 124 to 130 (WSFISSS).

This sequence belongs to the bacterial CoaD family. As to quaternary structure, homohexamer. Requires Mg(2+) as cofactor.

The protein resides in the cytoplasm. The catalysed reaction is (R)-4'-phosphopantetheine + ATP + H(+) = 3'-dephospho-CoA + diphosphate. The protein operates within cofactor biosynthesis; coenzyme A biosynthesis; CoA from (R)-pantothenate: step 4/5. In terms of biological role, reversibly transfers an adenylyl group from ATP to 4'-phosphopantetheine, yielding dephospho-CoA (dPCoA) and pyrophosphate. This is Phosphopantetheine adenylyltransferase from Cronobacter sakazakii (strain ATCC BAA-894) (Enterobacter sakazakii).